We begin with the raw amino-acid sequence, 450 residues long: Alpha-2B adrenergic receptor (450 aa).

Over 1–12 the chain is Extracellular; it reads MDHQDPYSVQAT. Residues 13–38 traverse the membrane as a helical segment; the sequence is AAIAAAITFLILFTIFGNALVILAVL. Residues 39–48 are Cytoplasmic-facing; the sequence is TSRSLRAPQN. A helical membrane pass occupies residues 49–69; it reads LFLVSLAAADILVATLIIPFS. The Extracellular portion of the chain corresponds to 70 to 86; sequence LANELLGYWYFRRTWCE. Residues Cys-85 and Cys-164 are joined by a disulfide bond. A helical transmembrane segment spans residues 87 to 107; sequence VYLALDVLFCTSSIVHLCAIS. Over 108 to 128 the chain is Cytoplasmic; that stretch reads LDRYWAVSRALEYNSKRTPRR. The chain crosses the membrane as a helical span at residues 129–149; that stretch reads IKCIILTVWLIAAVISLPPLI. Topologically, residues 150–172 are extracellular; that stretch reads YKGDQGPQPRGRPQCKLNQEAWY. A helical membrane pass occupies residues 173-193; sequence ILASSIGSFFAPCLIMILVYL. Residues 194-368 lie on the Cytoplasmic side of the membrane; that stretch reads RIYLIAKRSN…RRAQLTREKR (175 aa). Disordered stretches follow at residues 204–229 and 241–329; these read RRGP…GGAL and ASAR…PLQQ. Positions 246–256 are enriched in basic and acidic residues; it reads VNGHSKSTGEK. Residues 293–311 show a composition bias toward acidic residues; the sequence is PEDEAEEEEEEEEEEEECE. Low complexity predominate over residues 312 to 326; it reads PQAVPVSPASACSPP. Residues 369–389 traverse the membrane as a helical segment; the sequence is FTFVLAVVIGVFVLCWFPFFF. At 390 to 405 the chain is on the extracellular side; it reads SYSLGAICPKHCKVPH. The chain crosses the membrane as a helical span at residues 406–426; the sequence is GLFQFFFWIGYCNSSLNPVIY. Residues 427–450 lie on the Cytoplasmic side of the membrane; it reads TIFNQDFRRAFRRILCRPWTQTAW. Cys-442 is lipidated: S-palmitoyl cysteine.

It belongs to the G-protein coupled receptor 1 family. Adrenergic receptor subfamily. ADRA2B sub-subfamily. As to quaternary structure, interacts with RAB26. Interacts with PPP1R9B. Interacts with GGA1, GGA2 and GGA3.

The protein localises to the cell membrane. In terms of biological role, alpha-2 adrenergic receptors mediate the catecholamine-induced inhibition of adenylate cyclase through the action of G proteins. The rank order of potency for agonists of this receptor is clonidine &gt; norepinephrine &gt; epinephrine = oxymetazoline &gt; dopamine &gt; p-tyramine = phenylephrine &gt; serotonin &gt; p-synephrine / p-octopamine. For antagonists, the rank order is yohimbine &gt; chlorpromazine &gt; phentolamine &gt; mianserine &gt; spiperone &gt; prazosin &gt; alprenolol &gt; propanolol &gt; pindolol. The polypeptide is Alpha-2B adrenergic receptor (ADRA2B) (Homo sapiens (Human)).